A 340-amino-acid polypeptide reads, in one-letter code: UDP-3-O-(3-hydroxymyristoyl)glucosamine N-acyltransferase (340 aa).

The active-site Proton acceptor is the His-239.

It belongs to the transferase hexapeptide repeat family. LpxD subfamily. As to quaternary structure, homotrimer.

It carries out the reaction a UDP-3-O-[(3R)-3-hydroxyacyl]-alpha-D-glucosamine + a (3R)-hydroxyacyl-[ACP] = a UDP-2-N,3-O-bis[(3R)-3-hydroxyacyl]-alpha-D-glucosamine + holo-[ACP] + H(+). It catalyses the reaction UDP-3-O-[(3R)-3-hydroxytetradecanoyl]-alpha-D-glucosamine + (3R)-hydroxytetradecanoyl-[ACP] = UDP-2-N,3-O-bis[(3R)-3-hydroxytetradecanoyl]-alpha-D-glucosamine + holo-[ACP] + H(+). Its pathway is glycolipid biosynthesis; lipid IV(A) biosynthesis; lipid IV(A) from (3R)-3-hydroxytetradecanoyl-[acyl-carrier-protein] and UDP-N-acetyl-alpha-D-glucosamine: step 3/6. In terms of biological role, catalyzes the N-acylation of UDP-3-O-(hydroxytetradecanoyl)glucosamine using 3-hydroxytetradecanoyl-ACP as the acyl donor. Is involved in the biosynthesis of lipid A, a phosphorylated glycolipid that anchors the lipopolysaccharide to the outer membrane of the cell. This chain is UDP-3-O-(3-hydroxymyristoyl)glucosamine N-acyltransferase, found in Yersinia enterocolitica.